Consider the following 532-residue polypeptide: Neutral amino acid transporter A (532 aa).

At Met-1 the chain carries N-acetylmethionine. The span at 1-10 (MEKSNETNGY) shows a compositional bias: polar residues. A disordered region spans residues 1-25 (MEKSNETNGYLDSAQAGPAAGPGAP). At 1–41 (MEKSNETNGYLDSAQAGPAAGPGAPGTAAGRARRCAGFLRR) the chain is on the cytoplasmic side. Positions 14 to 25 (AQAGPAAGPGAP) are enriched in low complexity. Transmembrane regions (helical) follow at residues 42-62 (QALV…GAAL), 88-108 (MIIL…LDAS), and 119-139 (AYFG…AFII). Topologically, residues 140–216 (KPGSGAQTLQ…VTHEKIPIGT (77 aa)) are extracellular. N-linked (GlcNAc...) asparagine glycans are attached at residues Asn-201 and Asn-206. Helical transmembrane passes span 217 to 237 (EIEG…GVAL), 257 to 277 (ATMV…MFLV), 298 to 318 (IFAS…LIYF), 328 to 348 (FLLG…SSAT), 373 to 393 (IGAT…AVFI), and 418 to 438 (VGAA…LEAI). Residues 500–532 (CKSEEETSPLVTHQNPAGPVASAPELESKESVL) form a disordered region. Phosphoserine occurs at positions 507, 527, and 530.

It belongs to the dicarboxylate/amino acid:cation symporter (DAACS) (TC 2.A.23) family. SLC1A4 subfamily. Expressed mostly in brain, muscle, and pancreas but detected in all tissues examined.

The protein localises to the membrane. Its subcellular location is the melanosome. It carries out the reaction L-threonine(in) + Na(+)(in) = L-threonine(out) + Na(+)(out). It catalyses the reaction L-serine(in) + Na(+)(in) = L-serine(out) + Na(+)(out). The catalysed reaction is L-cysteine(in) + Na(+)(in) = L-cysteine(out) + Na(+)(out). The enzyme catalyses L-alanine(in) + Na(+)(in) = L-alanine(out) + Na(+)(out). It carries out the reaction L-proline(in) + Na(+)(in) = L-proline(out) + Na(+)(out). It catalyses the reaction 4-hydroxy-L-proline(in) + Na(+)(in) = 4-hydroxy-L-proline(out) + Na(+)(out). Functionally, sodium-dependent neutral amino-acid transporter that mediates transport of alanine, serine, cysteine, proline, hydroxyproline and threonine. The sequence is that of Neutral amino acid transporter A from Homo sapiens (Human).